The sequence spans 118 residues: UPF0342 protein Hore_03100 (118 aa).

The protein belongs to the UPF0342 family.

The protein is UPF0342 protein Hore_03100 of Halothermothrix orenii (strain H 168 / OCM 544 / DSM 9562).